The primary structure comprises 632 residues: Putative golgin subfamily A member 8I (632 aa).

The tract at residues 1 to 77 (MAEETQHNKL…SSATLKDLES (77 aa)) is disordered. Over residues 38–50 (TNGSIPQTATSGG) the composition is skewed to polar residues. 2 coiled-coil regions span residues 86–154 (LDSR…HMKR) and 209–421 (KLEQ…SLMA). Residues 352 to 362 (KQEERIQEQHK) are compositionally biased toward basic and acidic residues. Disordered stretches follow at residues 352–383 (KQEE…ENKS), 423–445 (PGEG…PMPS), 496–524 (LSEP…DEGE), and 550–569 (AHNP…ELGA). A compositionally biased stretch (gly residues) spans 508–520 (LGGGHHQAGAQGG). The interval 529–632 (AADGIAAYSN…CWAWLPRRRR (104 aa)) is golgi-targeting domain. The span at 555–568 (DEPGPGAPAPQELG) shows a compositional bias: low complexity.

Belongs to the GOLGA8 family.

The protein resides in the golgi apparatus. The protein localises to the golgi stack membrane. May be involved in maintaining Golgi structure. The polypeptide is Putative golgin subfamily A member 8I (Homo sapiens (Human)).